The following is a 166-amino-acid chain: 3-isopropylmalate dehydratase small subunit 1 (166 aa).

This sequence belongs to the LeuD family. LeuD type 2 subfamily. As to quaternary structure, heterodimer of LeuC and LeuD.

It carries out the reaction (2R,3S)-3-isopropylmalate = (2S)-2-isopropylmalate. It participates in amino-acid biosynthesis; L-leucine biosynthesis; L-leucine from 3-methyl-2-oxobutanoate: step 2/4. In terms of biological role, catalyzes the isomerization between 2-isopropylmalate and 3-isopropylmalate, via the formation of 2-isopropylmaleate. The chain is 3-isopropylmalate dehydratase small subunit 1 (leuD1) from Thermotoga maritima (strain ATCC 43589 / DSM 3109 / JCM 10099 / NBRC 100826 / MSB8).